We begin with the raw amino-acid sequence, 277 residues long: Indole-3-glycerol phosphate synthase (277 aa).

This sequence belongs to the TrpC family.

It carries out the reaction 1-(2-carboxyphenylamino)-1-deoxy-D-ribulose 5-phosphate + H(+) = (1S,2R)-1-C-(indol-3-yl)glycerol 3-phosphate + CO2 + H2O. Its pathway is amino-acid biosynthesis; L-tryptophan biosynthesis; L-tryptophan from chorismate: step 4/5. This chain is Indole-3-glycerol phosphate synthase, found in Pseudomonas putida (strain ATCC 47054 / DSM 6125 / CFBP 8728 / NCIMB 11950 / KT2440).